The sequence spans 285 residues: Thrombin-like enzyme TLBm (285 aa).

In terms of domain architecture, Peptidase S1 spans 1–273 (VIGGDECNIN…HLDWSQSVIA (273 aa)). 6 cysteine pairs are disulfide-bonded: cysteine 7-cysteine 181, cysteine 30-cysteine 46, cysteine 94-cysteine 284, cysteine 156-cysteine 234, cysteine 192-cysteine 209, and cysteine 224-cysteine 249. Catalysis depends on charge relay system residues histidine 45 and aspartate 113. The active-site Charge relay system is the serine 228.

Belongs to the peptidase S1 family. Snake venom subfamily. In terms of assembly, monomer. In terms of processing, homologous thrombin-like enzymes are N-glycosylated. This enzyme does not contain the consensus glycosylation sites, suggesting it is not glycosylated. As to expression, expressed by the venom gland.

The protein resides in the secreted. Its activity is regulated as follows. Inhibited by PMSF, disodium-EDTA, S(Dm) and soybean trypsin inhibitor (SBTI). SBTI and S(Dm) (the anti-hemorrhagic protein) acts as a non-competitive inhibitors that decrease the enzymatic activity. Its function is as follows. Thrombin-like enzyme that induces the formation of fibrin clot. Cleaves the Aalpha-chain of fibrinogen (FGA) with higher activity than the Bbeta-chain (FGB). Induces platelet aggregation in both platelet-rich plasma and in washed platelet preparations. This aggregation is strongly inhibited by preincubation of the enzyme with PMSF. This Bothrops marajoensis (Marajo lancehead) protein is Thrombin-like enzyme TLBm.